Consider the following 35-residue polypeptide: Conotoxin M11.2 (35 aa).

Cystine bridges form between cysteine 2–cysteine 16, cysteine 9–cysteine 21, cysteine 15–cysteine 26, and cysteine 20–cysteine 33.

This sequence belongs to the conotoxin I1 superfamily. In terms of tissue distribution, expressed by the venom duct.

It is found in the secreted. The sequence is that of Conotoxin M11.2 from Conus magus (Magical cone).